Here is a 384-residue protein sequence, read N- to C-terminus: S-adenosylmethionine synthase (384 aa).

Position 15 (H15) interacts with ATP. D17 lines the Mg(2+) pocket. E43 serves as a coordination point for K(+). Residues E56 and Q99 each contribute to the L-methionine site. The tract at residues 99-109 (QSADINQGVDR) is flexible loop. Residues 164–166 (DAK), 230–231 (RF), D239, 245–246 (RK), A262, and K266 contribute to the ATP site. D239 contacts L-methionine. K270 contributes to the L-methionine binding site.

Belongs to the AdoMet synthase family. As to quaternary structure, homotetramer; dimer of dimers. It depends on Mg(2+) as a cofactor. K(+) is required as a cofactor.

The protein resides in the cytoplasm. It catalyses the reaction L-methionine + ATP + H2O = S-adenosyl-L-methionine + phosphate + diphosphate. It functions in the pathway amino-acid biosynthesis; S-adenosyl-L-methionine biosynthesis; S-adenosyl-L-methionine from L-methionine: step 1/1. Its function is as follows. Catalyzes the formation of S-adenosylmethionine (AdoMet) from methionine and ATP. The overall synthetic reaction is composed of two sequential steps, AdoMet formation and the subsequent tripolyphosphate hydrolysis which occurs prior to release of AdoMet from the enzyme. This chain is S-adenosylmethionine synthase, found in Haemophilus influenzae (strain ATCC 51907 / DSM 11121 / KW20 / Rd).